The following is a 459-amino-acid chain: Serine permease SerP1 (459 aa).

Helical transmembrane passes span isoleucine 19–threonine 39, methionine 42–leucine 62, serine 97–isoleucine 117, phenylalanine 119–glycine 139, phenylalanine 153–leucine 173, phenylalanine 212–threonine 232, isoleucine 254–isoleucine 274, phenylalanine 281–valine 301, alanine 341–leucine 361, alanine 370–leucine 390, proline 412–phenylalanine 432, and threonine 436–phenylalanine 456.

Belongs to the amino acid-polyamine-organocation (APC) superfamily. Amino acid transporter (AAT) (TC 2.A.3.1) family.

It localises to the cell membrane. Functionally, transports L-serine, L-threonine and L-cysteine with high affinity. Stereoselective, with a strong preference for L-serine. Is the main L-serine transporter and is responsible for optimal growth in media containing free amino acids as the sole source of amino acids. Is also the main transporter for L-threonine. This Lactococcus lactis subsp. cremoris (strain MG1363) protein is Serine permease SerP1.